Consider the following 720-residue polypeptide: 1,4-alpha-glucan branching enzyme GlgB 2 (720 aa).

D398 serves as the catalytic Nucleophile. The Proton donor role is filled by E451.

Belongs to the glycosyl hydrolase 13 family. GlgB subfamily. In terms of assembly, monomer.

The catalysed reaction is Transfers a segment of a (1-&gt;4)-alpha-D-glucan chain to a primary hydroxy group in a similar glucan chain.. The protein operates within glycan biosynthesis; glycogen biosynthesis. Catalyzes the formation of the alpha-1,6-glucosidic linkages in glycogen by scission of a 1,4-alpha-linked oligosaccharide from growing alpha-1,4-glucan chains and the subsequent attachment of the oligosaccharide to the alpha-1,6 position. In Xanthomonas oryzae pv. oryzae (strain KACC10331 / KXO85), this protein is 1,4-alpha-glucan branching enzyme GlgB 2.